A 234-amino-acid chain; its full sequence is ATP-dependent dethiobiotin synthetase BioD (234 aa).

12-17 (DVGKTI) provides a ligand contact to ATP. Threonine 16 is a Mg(2+) binding site. Residue lysine 37 is part of the active site. Threonine 41 serves as a coordination point for substrate. ATP is bound by residues aspartate 54 and 115 to 118 (EGAG). Residues aspartate 54 and glutamate 115 each contribute to the Mg(2+) site.

The protein belongs to the dethiobiotin synthetase family. As to quaternary structure, homodimer. Mg(2+) serves as cofactor.

Its subcellular location is the cytoplasm. The enzyme catalyses (7R,8S)-7,8-diammoniononanoate + CO2 + ATP = (4R,5S)-dethiobiotin + ADP + phosphate + 3 H(+). The protein operates within cofactor biosynthesis; biotin biosynthesis; biotin from 7,8-diaminononanoate: step 1/2. In terms of biological role, catalyzes a mechanistically unusual reaction, the ATP-dependent insertion of CO2 between the N7 and N8 nitrogen atoms of 7,8-diaminopelargonic acid (DAPA, also called 7,8-diammoniononanoate) to form a ureido ring. The protein is ATP-dependent dethiobiotin synthetase BioD of Lysinibacillus sphaericus (strain C3-41).